We begin with the raw amino-acid sequence, 141 residues long: Large ribosomal subunit protein uL11 (141 aa).

Belongs to the universal ribosomal protein uL11 family. Part of the ribosomal stalk of the 50S ribosomal subunit. Interacts with L10 and the large rRNA to form the base of the stalk. L10 forms an elongated spine to which L12 dimers bind in a sequential fashion forming a multimeric L10(L12)X complex. In terms of processing, one or more lysine residues are methylated.

Forms part of the ribosomal stalk which helps the ribosome interact with GTP-bound translation factors. The polypeptide is Large ribosomal subunit protein uL11 (Streptococcus uberis (strain ATCC BAA-854 / 0140J)).